Reading from the N-terminus, the 588-residue chain is Proteasome-associated ATPase (588 aa).

Residues 1-10 (MAAHDDDMNR) are compositionally biased toward basic and acidic residues. The segment at 1–23 (MAAHDDDMNRGIRPGRGSDDPAG) is disordered. Positions 47–94 (RILEERIVELQTNLAGVSAQNERLANTLREARDQIVALKEEVDRLAQP) form a coiled coil. ATP is bound at residue 276-281 (GCGKTL). Residues 587-588 (YL) form a docks into pockets in the proteasome alpha-ring region.

This sequence belongs to the AAA ATPase family. In terms of assembly, homohexamer. Assembles into a hexameric ring structure that caps the 20S proteasome core. Strongly interacts with the prokaryotic ubiquitin-like protein Pup through a hydrophobic interface; the interacting region of ARC lies in its N-terminal coiled-coil domain. There is one Pup binding site per ARC hexamer ring. Upon ATP-binding, the C-terminus of ARC interacts with the alpha-rings of the proteasome core, possibly by binding to the intersubunit pockets.

The protein operates within protein degradation; proteasomal Pup-dependent pathway. In terms of biological role, ATPase which is responsible for recognizing, binding, unfolding and translocation of pupylated proteins into the bacterial 20S proteasome core particle. May be essential for opening the gate of the 20S proteasome via an interaction with its C-terminus, thereby allowing substrate entry and access to the site of proteolysis. Thus, the C-termini of the proteasomal ATPase may function like a 'key in a lock' to induce gate opening and therefore regulate proteolysis. In Streptomyces avermitilis (strain ATCC 31267 / DSM 46492 / JCM 5070 / NBRC 14893 / NCIMB 12804 / NRRL 8165 / MA-4680), this protein is Proteasome-associated ATPase.